Reading from the N-terminus, the 1093-residue chain is TATA element modulatory factor (1093 aa).

2 disordered regions span residues 38–80 (WAET…SPKA) and 108–189 (TIQK…DMKV). Residues 51-70 (SPVSGGWDTSTWGLKSNTEP) show a composition bias toward polar residues. Residues Ser72, Ser77, Ser112, and Ser136 each carry the phosphoserine modification. The span at 123-137 (QRPEEEVKSSLHESL) shows a compositional bias: basic and acidic residues. Positions 139 to 158 (IGQSRTPETTESQVKDSSLC) are enriched in polar residues. A compositionally biased stretch (basic and acidic residues) spans 173–187 (TEGKHEETVNKESDM). A phosphoserine mark is found at Ser199 and Ser217. Residues 229–238 (PKEQKHEDRQ) show a composition bias toward basic and acidic residues. Disordered stretches follow at residues 229 to 260 (PKEQKHEDRQSNTPSPPVSTFSSGTSTTSDIE) and 266 to 285 (SVISESSASSRQETTDSKSS). The segment covering 246 to 257 (VSTFSSGTSTTS) has biased composition (low complexity). Phosphoserine occurs at positions 328, 330, 333, 338, 344, 413, 542, 925, and 928. The segment at 333 to 342 (SLDSRSVSEI) is interaction with Elongin BC complex. The stretch at 439 to 922 (EALSEKEDVC…QETIKEKERK (484 aa)) forms a coiled coil. The disordered stretch occupies residues 919 to 939 (KERKPFSVSSTPTMSRSSSIS). The span at 925–939 (SVSSTPTMSRSSSIS) shows a compositional bias: low complexity. Position 929 is a phosphothreonine (Thr929). Phosphoserine is present on Ser933. The stretch at 984–1092 (SIIENLQSQL…QIDELLRQSL (109 aa)) forms a coiled coil.

Interacts with TRNP1; may regulate TRNP1 proteasomal degradation. Component of the SNF/SWI transcription factor complexes. Interacts with RAB6A. Interacts with STAT3 and FER. Interacts with TCEB1. Phosphorylated by FER.

Its subcellular location is the cytoplasm. The protein resides in the nucleus. The protein localises to the golgi apparatus membrane. Potential coactivator of the androgen receptor. Mediates STAT3 degradation. May play critical roles in two RAB6-dependent retrograde transport processes: one from endosomes to the Golgi and the other from the Golgi to the ER. This protein binds the HIV-1 TATA element and inhibits transcriptional activation by the TATA-binding protein (TBP). This Homo sapiens (Human) protein is TATA element modulatory factor (TMF1).